Here is a 150-residue protein sequence, read N- to C-terminus: 3-hydroxyacyl-[acyl-carrier-protein] dehydratase FabZ (150 aa).

His-57 is a catalytic residue.

The protein belongs to the thioester dehydratase family. FabZ subfamily.

The protein localises to the cytoplasm. The enzyme catalyses a (3R)-hydroxyacyl-[ACP] = a (2E)-enoyl-[ACP] + H2O. In terms of biological role, involved in unsaturated fatty acids biosynthesis. Catalyzes the dehydration of short chain beta-hydroxyacyl-ACPs and long chain saturated and unsaturated beta-hydroxyacyl-ACPs. The chain is 3-hydroxyacyl-[acyl-carrier-protein] dehydratase FabZ from Mannheimia succiniciproducens (strain KCTC 0769BP / MBEL55E).